The following is a 300-amino-acid chain: Ribosomal protein L11 methyltransferase (300 aa).

Residues Thr148, Gly171, Asp193, and Asn235 each contribute to the S-adenosyl-L-methionine site.

The protein belongs to the methyltransferase superfamily. PrmA family.

The protein resides in the cytoplasm. It carries out the reaction L-lysyl-[protein] + 3 S-adenosyl-L-methionine = N(6),N(6),N(6)-trimethyl-L-lysyl-[protein] + 3 S-adenosyl-L-homocysteine + 3 H(+). Functionally, methylates ribosomal protein L11. This is Ribosomal protein L11 methyltransferase from Desulfotalea psychrophila (strain LSv54 / DSM 12343).